The following is a 1170-amino-acid chain: Type I restriction enzyme EcoKI endonuclease subunit (1170 aa).

Residues 143–229 (YHQEVLTLKQ…QERKAYHKEI (87 aa)) adopt a coiled-coil conformation. The H-T-H motif DNA-binding region spans 431–450 (NQWFADNPGMSELGLRYYQE). The region spanning 458 to 639 (KAIVKGQQEI…GEPVYRYTYR (182 aa)) is the Helicase ATP-binding domain. Position 472 to 478 (472 to 478 (ATGTGKT)) interacts with ATP. The short motif at 574-577 (DEAH) is the DEAH box element. One can recognise a Helicase C-terminal domain in the interval 714–879 (ELTNYLDPTG…TLVNEITDSE (166 aa)).

The protein belongs to the HsdR family. The type I restriction/modification system is composed of three polypeptides R, M and S. The restriction enzyme has stoichiometry R(2)M(2)S(1). The methyltransferase is composed of M(2)S(1). In terms of assembly, (Microbial infection) Interacts with Escherichia phage T7 protein Ocr; this interaction leads to the inhibition of the type I bifunctional endonuclease and methyltransferase restriction enzyme R.EcoKI composed of R(2)M(2)S(1). Post-translationally, upon purification after overexpression about one-third has the initiating methionine removed.

The catalysed reaction is Endonucleolytic cleavage of DNA to give random double-stranded fragments with terminal 5'-phosphates, ATP is simultaneously hydrolyzed.. In terms of biological role, the subtype A restriction (R) subunit of a type I restriction enzyme that recognizes 5'-AACN(6)GTGC-3' and cleaves a random distance away. The R subunit is required for both endonuclease and ATPase activities but not for modification. Has endonucleolytic activity that requires Mg(2+), ATP and S-adenosyl-L-methionine (SAM); ATP can be replaced by dATP, no tested molecule could substitute for SAM. Generates double-stranded DNA with no nicks, by cutting one strand then the other within a few seconds. Cleaves only non-methylated DNA, hemi-methylated and fully methylated DNA are not substrates. After locating a non-methylated recognition site, the enzyme complex serves as a molecular motor that translocates DNA in an ATP-dependent manner until a collision occurs that triggers cleavage. This is Type I restriction enzyme EcoKI endonuclease subunit from Escherichia coli (strain K12).